A 447-amino-acid chain; its full sequence is Elongation factor 1-alpha (447 aa).

Positions 5–230 constitute a tr-type G domain; the sequence is KIHISIVVIG…DQISEPKRPS (226 aa). Residues 14-21 form a G1 region; sequence GHVDSGKS. Residue 14-21 participates in GTP binding; it reads GHVDSGKS. Lys-55 is subject to N6,N6-dimethyllysine. The interval 70–74 is G2; it reads GITID. Residue Lys-79 is modified to N6,N6,N6-trimethyllysine. Positions 91–94 are G3; the sequence is DAPG. GTP contacts are provided by residues 91–95 and 153–156; these read DAPGH and NKMD. The G4 stretch occupies residues 153-156; the sequence is NKMD. Position 187 is an N6,N6,N6-trimethyllysine (Lys-187). The G5 stretch occupies residues 194-196; sequence SGF. At Lys-261 the chain carries N6-methyllysine. A 5-glutamyl glycerylphosphorylethanolamine modification is found at Glu-289. Lys-306 carries the N6,N6,N6-trimethyllysine modification. Glu-362 is subject to 5-glutamyl glycerylphosphorylethanolamine. Lys-396 is modified (N6,N6,N6-trimethyllysine).

Belongs to the TRAFAC class translation factor GTPase superfamily. Classic translation factor GTPase family. EF-Tu/EF-1A subfamily.

It is found in the cytoplasm. Its function is as follows. This protein promotes the GTP-dependent binding of aminoacyl-tRNA to the A-site of ribosomes during protein biosynthesis. This Daucus carota (Wild carrot) protein is Elongation factor 1-alpha.